The primary structure comprises 355 residues: Guanine nucleotide-binding protein alpha-12 subunit (355 aa).

Residues 28–355 enclose the G-alpha domain; it reads RQINLLLLGS…EQNLKTLMMQ (328 aa). The interval 31 to 44 is G1 motif; it reads NLLLLGSGESGKST. GTP-binding positions include 36–43, 176–182, 201–205, 270–273, and Ala327; these read GSGESGKS, LFCRKAT, DVGGQ, and NKND. Residues Ser43 and Thr182 each coordinate Mg(2+). The interval 174–182 is G2 motif; that stretch reads DILFCRKAT. The G3 motif stretch occupies residues 197–206; the sequence is FRFIDVGGQR. The segment at 266 to 273 is G4 motif; it reads ILFMNKND. The interval 325 to 330 is G5 motif; the sequence is TTAVDT.

Belongs to the G-alpha family. In terms of assembly, g proteins are composed of 3 units; alpha, beta and gamma. The alpha chain contains the guanine nucleotide binding site.

Functionally, guanine nucleotide-binding proteins (G proteins) are involved as modulators or transducers in various transmembrane signaling systems. May play a role in resistance to fungal infection in the epidermis by regulating the up-regulation of several antimicrobial peptides of the NLP and CNC families. Upstream of plc-3, egl-8, tpa-1 and the p38-like pathway, required for the expression of antimicrobial peptide nlp-29 in the epidermis in response to fungal infection or physical injury. The chain is Guanine nucleotide-binding protein alpha-12 subunit (gpa-12) from Caenorhabditis briggsae.